The following is a 604-amino-acid chain: MCGIVGVVGNRNATDILMQGLEKLEYRGYDSAGIYVINQPENGRLIKSVGRIADLRAKIGIDVAGSTGIGHTRWATHGQATEENAHPHASATGRLVLVHNGVIENYLQIKENYLAGHNLKGETDTEIAVHLIGQFVTDGLSVLESFKKALHIIEGSYAFALIDSQNPDIIYVAKNKSPLLIGLGEGYNMVCSDAMAMIRETNQFMEIHDKELVVLTKDTAQVSDYDGNPVERQAYTAELDLSDIGKGTYPYYMLKEIDEQPTVMRKLISTYANENGKLTVDPAIVKSVQEADRIYILAAGTSYNAGFASKSMIETLTDTPVELGIASEWGYNMPLLSKKPMFILLSQSGETADSRQVLVKANAMGVPSLTITNVPGSTLSREATYTMLLHAGPEIAVASTKAYTAQIAALAFLSKAVGEANGKKEALEFDLVHELSIVAQSIEASLSEREVIEKKVANLLATSRNAFYIGRGNDYYVAMEASLKLKEISYIQCEGFAAGELKHGTISLIEEGTPVLALISSSETVAAHTRGNIQEVAARGANVLTVVEEGLNKEEDDVVVNQVHPYLSSISMVIPTQLIAYYASLQRGLDVDKPRNLAKAVTVE.

Residue cysteine 2 is the Nucleophile; for GATase activity of the active site. The Glutamine amidotransferase type-2 domain occupies 2–218; sequence CGIVGVVGNR…DKELVVLTKD (217 aa). SIS domains are found at residues 284 to 423 and 456 to 594; these read IVKS…ANGK and VANL…VDKP. The active-site For Fru-6P isomerization activity is lysine 599.

In terms of assembly, homodimer.

The protein resides in the cytoplasm. The enzyme catalyses D-fructose 6-phosphate + L-glutamine = D-glucosamine 6-phosphate + L-glutamate. Functionally, catalyzes the first step in hexosamine metabolism, converting fructose-6P into glucosamine-6P using glutamine as a nitrogen source. The sequence is that of Glutamine--fructose-6-phosphate aminotransferase [isomerizing] from Streptococcus mutans serotype c (strain ATCC 700610 / UA159).